A 74-amino-acid polypeptide reads, in one-letter code: Consomatin Gh1 (74 aa).

A signal peptide spans 1–22 (MQTACWVMVMMMVWITAPLSEG). Positions 23–57 (GKLNDVIRGLVPDDVTPQLILRSLFFHRPSDSVVR) are excised as a propeptide. C65 and C70 are disulfide-bonded. W67 carries the post-translational modification D-tryptophan. 3 positions are modified to 4-hydroxyproline: P71, P72, and P74.

It belongs to the conotoxin C superfamily. Consomatin family. In terms of tissue distribution, expressed by the venom duct.

Its subcellular location is the secreted. Functionally, moderately activates human somatostatin receptors (SSTR) with a preferential activation of SSTR1 and SSTR4. In vivo, does not cause behavioral changes in mice within a few minutes of intracranial injection, but causes a progressive loss of movement thereafter. Four to five hours after injection, mice recover, even with the highest dose tested. Shows antinociception and antihyperalgesia activities in two mouse models of acute pain, most probably by acting outside the central nervous system. The chain is Consomatin Gh1 from Conus grahami (Cone snail).